Consider the following 538-residue polypeptide: uncharacterized protein (538 aa).

The N-terminal stretch at 1 to 17 (MNLQILLLLLLFCHVAA) is a signal peptide. The N-linked (GlcNAc...) asparagine glycan is linked to Asn-115.

This is an uncharacterized protein from Caenorhabditis elegans.